We begin with the raw amino-acid sequence, 494 residues long: Glutamyl-tRNA(Gln) amidotransferase subunit A, mitochondrial (494 aa).

Active-site charge relay system residues include K79 and S160. Residue S184 is the Acyl-ester intermediate of the active site.

This sequence belongs to the amidase family. GatA subfamily. Subunit of the heterotrimeric GatCAB amidotransferase (AdT) complex, composed of A, B and C subunits.

It localises to the mitochondrion. It carries out the reaction L-glutamyl-tRNA(Gln) + L-glutamine + ATP + H2O = L-glutaminyl-tRNA(Gln) + L-glutamate + ADP + phosphate + H(+). Functionally, allows the formation of correctly charged Gln-tRNA(Gln) through the transamidation of misacylated Glu-tRNA(Gln) in the mitochondria. The reaction takes place in the presence of glutamine and ATP through an activated gamma-phospho-Glu-tRNA(Gln). In Aedes aegypti (Yellowfever mosquito), this protein is Glutamyl-tRNA(Gln) amidotransferase subunit A, mitochondrial.